A 396-amino-acid polypeptide reads, in one-letter code: ATP phosphoribosyltransferase regulatory subunit (396 aa).

This sequence belongs to the class-II aminoacyl-tRNA synthetase family. HisZ subfamily. Heteromultimer composed of HisG and HisZ subunits.

The protein resides in the cytoplasm. The protein operates within amino-acid biosynthesis; L-histidine biosynthesis; L-histidine from 5-phospho-alpha-D-ribose 1-diphosphate: step 1/9. In terms of biological role, required for the first step of histidine biosynthesis. May allow the feedback regulation of ATP phosphoribosyltransferase activity by histidine. This chain is ATP phosphoribosyltransferase regulatory subunit, found in Alkaliphilus metalliredigens (strain QYMF).